A 318-amino-acid chain; its full sequence is ATP phosphoribosyltransferase regulatory subunit (318 aa).

The protein belongs to the class-II aminoacyl-tRNA synthetase family. HisZ subfamily. In terms of assembly, heteromultimer composed of HisG and HisZ subunits.

Its subcellular location is the cytoplasm. It participates in amino-acid biosynthesis; L-histidine biosynthesis; L-histidine from 5-phospho-alpha-D-ribose 1-diphosphate: step 1/9. Functionally, required for the first step of histidine biosynthesis. May allow the feedback regulation of ATP phosphoribosyltransferase activity by histidine. This Lactococcus lactis subsp. cremoris (strain SK11) protein is ATP phosphoribosyltransferase regulatory subunit.